Consider the following 199-residue polypeptide: ATP-dependent Clp protease proteolytic subunit 2 (199 aa).

Serine 98 functions as the Nucleophile in the catalytic mechanism. The active site involves histidine 123.

This sequence belongs to the peptidase S14 family. As to quaternary structure, fourteen ClpP subunits assemble into 2 heptameric rings which stack back to back to give a disk-like structure with a central cavity, resembling the structure of eukaryotic proteasomes.

Its subcellular location is the cytoplasm. It catalyses the reaction Hydrolysis of proteins to small peptides in the presence of ATP and magnesium. alpha-casein is the usual test substrate. In the absence of ATP, only oligopeptides shorter than five residues are hydrolyzed (such as succinyl-Leu-Tyr-|-NHMec, and Leu-Tyr-Leu-|-Tyr-Trp, in which cleavage of the -Tyr-|-Leu- and -Tyr-|-Trp bonds also occurs).. Cleaves peptides in various proteins in a process that requires ATP hydrolysis. Has a chymotrypsin-like activity. Plays a major role in the degradation of misfolded proteins. The polypeptide is ATP-dependent Clp protease proteolytic subunit 2 (Corynebacterium efficiens (strain DSM 44549 / YS-314 / AJ 12310 / JCM 11189 / NBRC 100395)).